The primary structure comprises 440 residues: Chromosome partition protein MukF (440 aa).

The tract at residues 208–236 (LDETSGNLRELQDTLNAAGDKLQSQLLRI) is leucine-zipper.

Belongs to the MukF family. Interacts, and probably forms a ternary complex, with MukE and MukB via its C-terminal region. The complex formation is stimulated by calcium or magnesium. It is required for an interaction between MukE and MukB.

The protein resides in the cytoplasm. It localises to the nucleoid. Involved in chromosome condensation, segregation and cell cycle progression. May participate in facilitating chromosome segregation by condensation DNA from both sides of a centrally located replisome during cell division. Not required for mini-F plasmid partitioning. Probably acts via its interaction with MukB and MukE. Overexpression results in anucleate cells. It has a calcium binding activity. The polypeptide is Chromosome partition protein MukF (Histophilus somni (strain 2336) (Haemophilus somnus)).